Here is a 236-residue protein sequence, read N- to C-terminus: Small ribosomal subunit protein uS3 (236 aa).

Residues 39-107 enclose the KH type-2 domain; sequence IREFLTEELK…DTSLNIVEVR (69 aa). The segment at 214–236 is disordered; sequence ASERRAVEGDNQGSSSNRRRENA.

The protein belongs to the universal ribosomal protein uS3 family. In terms of assembly, part of the 30S ribosomal subunit. Forms a tight complex with proteins S10 and S14.

Its function is as follows. Binds the lower part of the 30S subunit head. Binds mRNA in the 70S ribosome, positioning it for translation. The protein is Small ribosomal subunit protein uS3 of Brucella anthropi (strain ATCC 49188 / DSM 6882 / CCUG 24695 / JCM 21032 / LMG 3331 / NBRC 15819 / NCTC 12168 / Alc 37) (Ochrobactrum anthropi).